A 234-amino-acid chain; its full sequence is MIELWPAIDLIGSTSVRLTEGKYDSEEKMSRSAEESIAYYSQFECVNRIHIVDLIGAKAQYAREFDYIKSLRRLTTKDIEVGGGIRTKSQIMDYFAAGINYCIVGTKGIQDTDWLKEMAHTFPGRIYLSVDAYGEDIKVNGWEEDTELNLFSFVRQLSDIPLGGIIYTDIAKDGKMSGPNFELTGQLVKATTIPVIASGGIRHQQDIQRLASLNVHAAIIGKAAHQASFWEGLE.

The active-site Proton acceptor is the D9. The active-site Proton donor is D131.

The protein belongs to the HisA/HisF family.

The protein localises to the cytoplasm. The catalysed reaction is 1-(5-phospho-beta-D-ribosyl)-5-[(5-phospho-beta-D-ribosylamino)methylideneamino]imidazole-4-carboxamide = 5-[(5-phospho-1-deoxy-D-ribulos-1-ylimino)methylamino]-1-(5-phospho-beta-D-ribosyl)imidazole-4-carboxamide. Its pathway is amino-acid biosynthesis; L-histidine biosynthesis; L-histidine from 5-phospho-alpha-D-ribose 1-diphosphate: step 4/9. The chain is 1-(5-phosphoribosyl)-5-[(5-phosphoribosylamino)methylideneamino] imidazole-4-carboxamide isomerase from Staphylococcus aureus (strain JH1).